A 967-amino-acid polypeptide reads, in one-letter code: Putative helicase MOV-10 (967 aa).

Residues 85–117 form a disordered region; the sequence is ADQYRRPRTDTEVSAPAPGQQPSSGPPAPQSRA. Over residues 98-107 the composition is skewed to low complexity; the sequence is SAPAPGQQPS. ATP is bound at residue 516-523; it reads GPPGTGKT. A DEAG box motif is present at residues 638-641; that stretch reads DECG.

This sequence belongs to the DNA2/NAM7 helicase family. SDE3 subfamily.

The protein resides in the cytoplasm. It is found in the P-body. It localises to the cytoplasmic ribonucleoprotein granule. The protein localises to the stress granule. Its subcellular location is the nucleus. It catalyses the reaction ATP + H2O = ADP + phosphate + H(+). Functionally, 5' to 3' RNA helicase that is involved in a number of cellular roles ranging from mRNA metabolism and translation, modulation of viral infectivity, inhibition of retrotransposition, or regulation of synaptic transmission. Plays an important role in innate antiviral immunity by promoting type I interferon production. Required for microRNA (miRNA)-mediated gene silencing by the RNA-induced silencing complex (RISC). Required for both miRNA-mediated translational repression and miRNA-mediated cleavage of complementary mRNAs by RISC. In cooperation with FMR1, regulates miRNA-mediated translational repression by AGO2. Restricts retrotransposition of long interspersed element-1 (LINE-1). Required for embryonic viability and for normal central nervous system development and function. May function as a messenger ribonucleoprotein (mRNP) clearance factor. The chain is Putative helicase MOV-10 (MOV10) from Gallus gallus (Chicken).